The chain runs to 295 residues: Glutamyl-Q tRNA(Asp) synthetase (295 aa).

L-glutamate-binding positions include Arg-6–Ser-10 and Glu-42. The short motif at Pro-9–Asn-19 is the 'HIGH' region element. Positions 93, 95, 118, and 122 each coordinate Zn(2+). 2 residues coordinate L-glutamate: Tyr-177 and Arg-195. Residues Arg-233–Arg-237 carry the 'KMSKS' region motif. Position 236 (Lys-236) interacts with ATP.

Belongs to the class-I aminoacyl-tRNA synthetase family. GluQ subfamily. The cofactor is Zn(2+).

Functionally, catalyzes the tRNA-independent activation of glutamate in presence of ATP and the subsequent transfer of glutamate onto a tRNA(Asp). Glutamate is transferred on the 2-amino-5-(4,5-dihydroxy-2-cyclopenten-1-yl) moiety of the queuosine in the wobble position of the QUC anticodon. This is Glutamyl-Q tRNA(Asp) synthetase from Deinococcus radiodurans (strain ATCC 13939 / DSM 20539 / JCM 16871 / CCUG 27074 / LMG 4051 / NBRC 15346 / NCIMB 9279 / VKM B-1422 / R1).